The following is a 64-amino-acid chain: Alpha-conotoxin CnIC (64 aa).

An N-terminal signal peptide occupies residues 1–21 (MGMRMMFTVFLLVVLTTTVVS). A propeptide spanning residues 22–47 (FPSDSASDVRDDEAKDERSDMYKSKR) is cleaved from the precursor. Asn48 carries the post-translational modification Deamidated asparagine; in CnIH; partial. Intrachain disulfides connect Cys51-Cys56 and Cys52-Cys62. Position 62 is a cysteine amide (Cys62).

The protein belongs to the conotoxin A superfamily. Expressed by the venom duct.

The protein resides in the secreted. Its function is as follows. Alpha-conotoxins act on postsynaptic membranes, they bind to the nicotinic acetylcholine receptors (nAChR) and thus inhibit them. The sequence is that of Alpha-conotoxin CnIC from Conus consors (Singed cone).